The sequence spans 529 residues: Cytochrome P450 monooxygenase ausG (529 aa).

A helical transmembrane segment spans residues 31–51 (LLVVCGLPGLLLLFFVTAILL). Residue Cys470 participates in heme binding.

The protein belongs to the cytochrome P450 family. The cofactor is heme.

The protein localises to the membrane. Its pathway is secondary metabolite biosynthesis; terpenoid biosynthesis. Functionally, cytochrome P450 monooxygenase; part of the gene cluster that mediates the biosynthesis of calidodehydroaustin, a fungal meroterpenoid. The first step of the pathway is the synthesis of 3,5-dimethylorsellinic acid by the polyketide synthase ausA. 3,5-dimethylorsellinic acid is then prenylated by the polyprenyl transferase ausN. Further epoxidation by the FAD-dependent monooxygenase ausM and cyclization by the probable terpene cyclase ausL lead to the formation of protoaustinoid A. Protoaustinoid A is then oxidized to spiro-lactone preaustinoid A3 by the combined action of the FAD-binding monooxygenases ausB and ausC, and the dioxygenase ausE. Acid-catalyzed keto-rearrangement and ring contraction of the tetraketide portion of preaustinoid A3 by ausJ lead to the formation of preaustinoid A4. The aldo-keto reductase ausK, with the help of ausH, is involved in the next step by transforming preaustinoid A4 into isoaustinone which is in turn hydroxylated by the P450 monooxygenase ausI to form austinolide. The cytochrome P450 monooxygenase ausG modifies austinolide to austinol. Austinol is further acetylated to austin by the O-acetyltransferase ausP, which spontaneously changes to dehydroaustin. The cytochrome P450 monooxygenase ausR then converts dehydroaustin is into 7-dehydrodehydroaustin. The hydroxylation catalyzed by ausR permits the O-acetyltransferase ausQ to add an additional acetyl group to the molecule, leading to the formation of acetoxydehydroaustin. The short chain dehydrogenase ausT catalyzes the reduction of the double bond present between carbon atoms 1 and 2 to convert 7-dehydrodehydroaustin into 1,2-dihydro-7-hydroxydehydroaustin. AusQ catalyzes not only an acetylation reaction but also the addition of the PKS ausV diketide product to 1,2-dihydro-7-hydroxydehydroaustin, forming precalidodehydroaustin. Finally, the iron/alpha-ketoglutarate-dependent dioxygenase converts precalidodehydroaustin into calidodehydroaustin. This Aspergillus calidoustus protein is Cytochrome P450 monooxygenase ausG.